Here is a 145-residue protein sequence, read N- to C-terminus: D-aminoacyl-tRNA deacylase (145 aa).

The Gly-cisPro motif, important for rejection of L-amino acids motif lies at 137-138; sequence GP.

This sequence belongs to the DTD family. In terms of assembly, homodimer.

It localises to the cytoplasm. It carries out the reaction glycyl-tRNA(Ala) + H2O = tRNA(Ala) + glycine + H(+). It catalyses the reaction a D-aminoacyl-tRNA + H2O = a tRNA + a D-alpha-amino acid + H(+). Functionally, an aminoacyl-tRNA editing enzyme that deacylates mischarged D-aminoacyl-tRNAs. Also deacylates mischarged glycyl-tRNA(Ala), protecting cells against glycine mischarging by AlaRS. Acts via tRNA-based rather than protein-based catalysis; rejects L-amino acids rather than detecting D-amino acids in the active site. By recycling D-aminoacyl-tRNA to D-amino acids and free tRNA molecules, this enzyme counteracts the toxicity associated with the formation of D-aminoacyl-tRNA entities in vivo and helps enforce protein L-homochirality. In Methylacidiphilum infernorum (isolate V4) (Methylokorus infernorum (strain V4)), this protein is D-aminoacyl-tRNA deacylase.